The sequence spans 83 residues: MYB-like transcription factor ETC1 (83 aa).

Residues 35-72 form the Myb-like domain; it reads AQEEEDLICRMYKLVGERWDLIAGRIPGRTAEEIERFW.

In terms of tissue distribution, expressed in developing trichomes and non-root hair cells.

Its subcellular location is the nucleus. MYB-type transcription factor involved in epidermal cell fate specification. Acts as a negative regulator of trichome development, by mediating lateral inhibition. Promotes the formation of hair developing cells in H position in root epidermis, probably by inhibiting non-hair cell formation. In Arabidopsis thaliana (Mouse-ear cress), this protein is MYB-like transcription factor ETC1 (ETC1).